Here is a 55-residue protein sequence, read N- to C-terminus: Large ribosomal subunit protein bL33 (55 aa).

Residues 1 to 11 are compositionally biased toward basic and acidic residues; that stretch reads MAKGGREKIKL. The interval 1–29 is disordered; the sequence is MAKGGREKIKLESSAGTGHFYTTSKNKRT. Polar residues predominate over residues 14–24; sequence SAGTGHFYTTS.

Belongs to the bacterial ribosomal protein bL33 family.

This Polynucleobacter asymbioticus (strain DSM 18221 / CIP 109841 / QLW-P1DMWA-1) (Polynucleobacter necessarius subsp. asymbioticus) protein is Large ribosomal subunit protein bL33.